The following is a 548-amino-acid chain: Membrane protein insertase YidC (548 aa).

A helical membrane pass occupies residues 6–26 (NLLVIALLFVSFMIWQAWEQD). The interval 28–56 (NPQPQTQQTTQTTTTAAGSAADQGVPASG) is disordered. Low complexity predominate over residues 29 to 42 (PQPQTQQTTQTTTT). Transmembrane regions (helical) follow at residues 350-370 (FVGNWGFSIIIITFIVRGIMY), 424-444 (FPLIIQMPIFLALYYMLMGSI), 458-478 (LSAQDPYYILPILMGVTMFFI), and 499-519 (PVIFTVFFLWFPSGLVLYYIV).

Belongs to the OXA1/ALB3/YidC family. Type 1 subfamily. As to quaternary structure, interacts with the Sec translocase complex via SecD. Specifically interacts with transmembrane segments of nascent integral membrane proteins during membrane integration.

The protein resides in the cell inner membrane. Its function is as follows. Required for the insertion and/or proper folding and/or complex formation of integral membrane proteins into the membrane. Involved in integration of membrane proteins that insert both dependently and independently of the Sec translocase complex, as well as at least some lipoproteins. Aids folding of multispanning membrane proteins. The chain is Membrane protein insertase YidC from Salmonella typhimurium (strain LT2 / SGSC1412 / ATCC 700720).